Consider the following 1064-residue polypeptide: DNA-directed RNA polymerase subunit beta (1064 aa).

It belongs to the RNA polymerase beta chain family. In plastids the minimal PEP RNA polymerase catalytic core is composed of four subunits: alpha, beta, beta', and beta''. When a (nuclear-encoded) sigma factor is associated with the core the holoenzyme is formed, which can initiate transcription.

The protein resides in the plastid. It is found in the chloroplast. The enzyme catalyses RNA(n) + a ribonucleoside 5'-triphosphate = RNA(n+1) + diphosphate. Its function is as follows. DNA-dependent RNA polymerase catalyzes the transcription of DNA into RNA using the four ribonucleoside triphosphates as substrates. The polypeptide is DNA-directed RNA polymerase subunit beta (Jasminum nudiflorum (Winter jasmine)).